The chain runs to 341 residues: S-adenosylmethionine:tRNA ribosyltransferase-isomerase (341 aa).

This sequence belongs to the QueA family. In terms of assembly, monomer.

It localises to the cytoplasm. The enzyme catalyses 7-aminomethyl-7-carbaguanosine(34) in tRNA + S-adenosyl-L-methionine = epoxyqueuosine(34) in tRNA + adenine + L-methionine + 2 H(+). It functions in the pathway tRNA modification; tRNA-queuosine biosynthesis. Transfers and isomerizes the ribose moiety from AdoMet to the 7-aminomethyl group of 7-deazaguanine (preQ1-tRNA) to give epoxyqueuosine (oQ-tRNA). The protein is S-adenosylmethionine:tRNA ribosyltransferase-isomerase of Clostridium botulinum (strain Eklund 17B / Type B).